A 577-amino-acid chain; its full sequence is MIKIIIKETFSFKSVLMHFLKEKVSNNKISKKNKIMPSYTLLSCIDSRVENLTKFYGRFELGPFAPGQALTVANALRRSLLSQLPGTSITLVEVRGASNEYEIITGVRESILDILLNLKQIVLTSDFEIFSPQIGFLSVEGPGVIRANDLKLPSFIYAVDPNQYIATLSNSGRLNMKFLICCGKNYITYNPNDSQYFEWLSLLKKSKPLIKSNSPKLNKGNINSEIDSDISIDKKNDEVIFFQNANTRVVDSQTALKKGLVLKNTLRINKSSFLINSNYQSFFPKTQQKAFSIFRKNSKTFLSTMGFYKEWKKEREFLKKDLYKNQEDFNKSYDFQETKKKLQTKLIKNFETPKKKLFKVQNSANPFNKAFIPLTEEKVDYDSDFNLDHKSTKIGYFPIDAIFMPINRVNYLIESTEDIKLKIKDRVILEVWTNGSIHPRHAIHKAAKALIQLFLPLQQIRTNLFLISDNSHFEEGQDKIKKRIDNFKKEALLKANPQIQANPQLKKRNFDHRLLELDIANLELTARPYSCLKLANINTIEDLISYSQEDLLSIKNFGRRSLIEVQKALQLMKLTLK.

The segment at 1–461 is alpha N-terminal domain (alpha-NTD); the sequence is MIKIIIKETF…QLFLPLQQIR (461 aa). The interval 510 to 577 is alpha C-terminal domain (alpha-CTD); the sequence is FDHRLLELDI…ALQLMKLTLK (68 aa).

It belongs to the RNA polymerase alpha chain family. As to quaternary structure, in plastids the minimal PEP RNA polymerase catalytic core is composed of four subunits: alpha, beta, beta', and beta''. When a (nuclear-encoded) sigma factor is associated with the core the holoenzyme is formed, which can initiate transcription.

Its subcellular location is the plastid. It is found in the chloroplast. It catalyses the reaction RNA(n) + a ribonucleoside 5'-triphosphate = RNA(n+1) + diphosphate. Functionally, DNA-dependent RNA polymerase catalyzes the transcription of DNA into RNA using the four ribonucleoside triphosphates as substrates. This Tupiella akineta (Green alga) protein is DNA-directed RNA polymerase subunit alpha.